We begin with the raw amino-acid sequence, 472 residues long: RVRKKDYFGIWSFPLIIAAVCAQSVNDPSNMSLVKETVDRLLKGYDIRLRPDFGGPPVAVGMNIDIASIDMVSEVNMDYTLTMYFQQAWRDKRLSYNVIPLNLTLDNRVADQLWVPDTYFLNDKKSFVHGVTVKNRMIRLHPDGTVLYGLRITTTTACMMDLRRYPLDEQNCTLEIESYGYTTDDIEFYWRGDDNAVTGVTKIELPQFSIVDYKLITKKVVFSTGSYPRLSLSFKLKRNIGYFILQTYMPSILITILSWVSFWINYDASAARVALGITTVLTMTTINTHLRETLPKIPYVKAIDMYLMGCFVFVFMALLEYALVNYIFFGRGPQRQKKAAEKAASANNEKMRLDVNKMDPHENILLSTLEIKNEMATSEAVMGLGDPRSTMLAYDASSIQYRKAGLPRHSFWRNALERHVAQKKSRLRERASQLKITIPDLTDVNAIDRWSRIFFPVVFSFFNIVYWLYYVN.

The N-terminal stretch at 1–23 (RVRKKDYFGIWSFPLIIAAVCAQ) is a signal peptide. Over 24 to 239 (SVNDPSNMSL…LSLSFKLKRN (216 aa)) the chain is Extracellular. N-linked (GlcNAc...) asparagine glycosylation is found at asparagine 30 and asparagine 102. Residue tyrosine 119 coordinates histamine. Residues cysteine 158 and cysteine 172 are joined by a disulfide bond. Residues 178–179 (SY) and threonine 224 each bind histamine. 4-aminobutanoate contacts are provided by tyrosine 179 and threonine 224. A run of 3 helical transmembrane segments spans residues 240–260 (IGYF…LSWV), 271–290 (ARVA…NTHL), and 309–329 (GCFV…YIFF). Residues 287-308 (NTHLRETLPKIPYVKAIDMYLM) form an etomidate binding; allosteric effector region. The Cytoplasmic portion of the chain corresponds to 330-450 (GRGPQRQKKA…LTDVNAIDRW (121 aa)). Position 401 is a phosphotyrosine (tyrosine 401). Residues 451 to 471 (SRIFFPVVFSFFNIVYWLYYV) traverse the membrane as a helical segment.

It belongs to the ligand-gated ion channel (TC 1.A.9) family. Gamma-aminobutyric acid receptor (TC 1.A.9.5) subfamily. GABRB2 sub-subfamily. Heteropentamer, formed by a combination of alpha (GABRA1-6), beta (GABRB1-3), gamma (GABRG1-3), delta (GABRD), epsilon (GABRE), rho (GABRR1-3), pi (GABRP) and theta (GABRQ) chains, each subunit exhibiting distinct physiological and pharmacological properties. Interacts with UBQLN1. May interact with KIF21B. Identified in a complex of 720 kDa composed of LHFPL4, NLGN2, GABRA1, GABRB2, GABRG2 and GABRB3. Glycosylated.

It localises to the postsynaptic cell membrane. The protein resides in the cell membrane. Its subcellular location is the cytoplasmic vesicle membrane. It carries out the reaction chloride(in) = chloride(out). With respect to regulation, allosterically activated by benzodiazepines. Allosterically activated by the anesthetic etomidate. Inhibited by the antagonist bicuculline. Potentiated by histamine. In terms of biological role, beta subunit of the heteropentameric ligand-gated chloride channel gated by gamma-aminobutyric acid (GABA), a major inhibitory neurotransmitter in the brain. GABA-gated chloride channels, also named GABA(A) receptors (GABAAR), consist of five subunits arranged around a central pore and contain GABA active binding site(s) located at the alpha and beta subunit interface(s). When activated by GABA, GABAARs selectively allow the flow of chloride anions across the cell membrane down their electrochemical gradient. Chloride influx into the postsynaptic neuron following GABAAR opening decreases the neuron ability to generate a new action potential, thereby reducing nerve transmission. GABAARs containing alpha-1 and beta-2 or -3 subunits exhibit synaptogenic activity; the gamma-2 subunit being necessary but not sufficient to induce rapid synaptic contacts formation. Extrasynaptic beta-2 receptors contribute to the tonic GABAergic inhibition. Beta-containing GABAARs can simultaneously bind GABA and histamine where histamine binds at the interface of two neighboring beta subunits, which may be involved in the regulation of sleep and wakefulness. The polypeptide is Gamma-aminobutyric acid receptor subunit beta-2 (GABRB2) (Bos taurus (Bovine)).